Reading from the N-terminus, the 166-residue chain is Ubiquitin-conjugating enzyme E2-18 kDa (166 aa).

The UBC core domain maps to 5–165 (MALRRLMKEY…VRRLARKTLG (161 aa)). Catalysis depends on C90, which acts as the Glycyl thioester intermediate. A Glycyl cysteine thioester (Cys-Gly) (interchain with G-Cter in ubiquitin) cross-link involves residue C90.

The protein belongs to the ubiquitin-conjugating enzyme family. Post-translationally, autoubiquitinated at Cys-90; undergoes 'Lys-48'-linked polyubiquitination, which leads to proteasome-dependent protein degradation.

The catalysed reaction is S-ubiquitinyl-[E1 ubiquitin-activating enzyme]-L-cysteine + [E2 ubiquitin-conjugating enzyme]-L-cysteine = [E1 ubiquitin-activating enzyme]-L-cysteine + S-ubiquitinyl-[E2 ubiquitin-conjugating enzyme]-L-cysteine.. It participates in protein modification; protein ubiquitination. In terms of biological role, catalyzes the covalent attachment of ubiquitin to other proteins. Functions in degradation of misfolded or regulated proteins localized in the endoplasmic reticulum (ER) lumen or membrane via the ubiquitin-proteasome system. Cognate E2 conjugating enzyme for the doa10 ubiquitin ligase complex, which is part of the ERAD-C pathway responsible for the rapid degradation of membrane proteins with misfolded cytoplasmic domains, and of the hrd1 ubiquitin ligase complex, which is part of the ERAD-L and ERAD-M pathways responsible for the rapid degradation of soluble lumenal and membrane proteins with misfolded lumenal domains (ERAD-L), or ER-membrane proteins with misfolded transmembrane domains (ERAD-M). Together with hrd1, required for the degradation of the transcription factor sre1 precursor in the absence of its binding partner scp1. Has a role in the formation of chromatin structures that influence the localization of transcriptional silencing factors. The protein is Ubiquitin-conjugating enzyme E2-18 kDa (ubc7) of Schizosaccharomyces pombe (strain 972 / ATCC 24843) (Fission yeast).